We begin with the raw amino-acid sequence, 37 residues long: MKIRASIRRICGKCRPIRRRKRVMIICSNPRHKQKQG.

It belongs to the bacterial ribosomal protein bL36 family.

It localises to the plastid. Its subcellular location is the chloroplast. The protein is Large ribosomal subunit protein bL36c of Pinus koraiensis (Korean pine).